The following is a 152-amino-acid chain: Putative rho GDP-dissociation inhibitor 2 (152 aa).

The protein belongs to the Rho GDI family.

The protein resides in the cytoplasm. Functionally, regulates the GDP/GTP exchange reaction of the Rho proteins by inhibiting the dissociation of GDP from them, and the subsequent binding of GTP to them. The polypeptide is Putative rho GDP-dissociation inhibitor 2 (rdiB) (Dictyostelium discoideum (Social amoeba)).